The primary structure comprises 508 residues: Steroid 17-alpha-hydroxylase/17,20 lyase (508 aa).

Substrate is bound at residue N202. C442 provides a ligand contact to heme.

This sequence belongs to the cytochrome P450 family. Requires heme as cofactor.

Its subcellular location is the endoplasmic reticulum membrane. It is found in the microsome membrane. The catalysed reaction is a C21-steroid + reduced [NADPH--hemoprotein reductase] + O2 = a 17alpha-hydroxy-C21-steroid + oxidized [NADPH--hemoprotein reductase] + H2O + H(+). The enzyme catalyses progesterone + reduced [NADPH--hemoprotein reductase] + O2 = 17alpha-hydroxyprogesterone + oxidized [NADPH--hemoprotein reductase] + H2O + H(+). It carries out the reaction pregnenolone + reduced [NADPH--hemoprotein reductase] + O2 = 17alpha-hydroxypregnenolone + oxidized [NADPH--hemoprotein reductase] + H2O + H(+). It catalyses the reaction 17alpha-hydroxyprogesterone + reduced [NADPH--hemoprotein reductase] + O2 = androst-4-ene-3,17-dione + acetate + oxidized [NADPH--hemoprotein reductase] + H2O + 2 H(+). The catalysed reaction is 17alpha-hydroxyprogesterone + reduced [NADPH--hemoprotein reductase] + O2 = 16alpha,17alpha-dihydroxyprogesterone + oxidized [NADPH--hemoprotein reductase] + H2O + H(+). The enzyme catalyses 16alpha,17alpha-dihydroxyprogesterone + reduced [NADPH--hemoprotein reductase] + O2 = 6beta,16alpha,17alpha-trihydroxyprogesterone + oxidized [NADPH--hemoprotein reductase] + H2O + H(+). It carries out the reaction 17alpha-hydroxypregnenolone + reduced [NADPH--hemoprotein reductase] + O2 = 3beta-hydroxyandrost-5-en-17-one + acetate + oxidized [NADPH--hemoprotein reductase] + H2O + 2 H(+). It catalyses the reaction 16alpha,17alpha-dihydroxypregnenolone + reduced [NADPH--hemoprotein reductase] + O2 = 3beta,16alpha-dihydroxy-androst-5-en-17-one + acetate + oxidized [NADPH--hemoprotein reductase] + H2O + 2 H(+). The catalysed reaction is 3beta-hydroxyandrost-5-en-17-one + reduced [NADPH--hemoprotein reductase] + O2 = 3beta,16alpha-dihydroxy-androst-5-en-17-one + oxidized [NADPH--hemoprotein reductase] + H2O + H(+). The enzyme catalyses androst-4-ene-3,17-dione + reduced [NADPH--hemoprotein reductase] + O2 = 16alpha-hydroxyandrost-4-ene-3,17-dione + oxidized [NADPH--hemoprotein reductase] + H2O + H(+). It participates in steroid hormone biosynthesis. The protein operates within steroid biosynthesis; glucocorticoid biosynthesis. Regulated predominantly by intracellular cAMP levels. The 17,20-lyase activity is stimulated by cytochrome b5, which acts as an allosteric effector increasing the Vmax of the lyase activity. Functionally, a cytochrome P450 monooxygenase involved in corticoid and androgen biosynthesis. Catalyzes 17-alpha hydroxylation of C21 steroids, which is common for both pathways. A second oxidative step, required only for androgen synthesis, involves an acyl-carbon cleavage. The 17-alpha hydroxy intermediates, as part of adrenal glucocorticoids biosynthesis pathway, are precursors of cortisol. Hydroxylates steroid hormones, pregnenolone and progesterone to form 17-alpha hydroxy metabolites, followed by the cleavage of the C17-C20 bond to form C19 steroids, dehydroepiandrosterone (DHEA) and androstenedione. Has 16-alpha hydroxylase activity. Catalyzes 16-alpha hydroxylation of 17-alpha hydroxy pregnenolone, followed by the cleavage of the C17-C20 bond to form 16-alpha-hydroxy DHEA. Also 16-alpha hydroxylates androgens, relevant for estriol synthesis. Mechanistically, uses molecular oxygen inserting one oxygen atom into a substrate, and reducing the second into a water molecule, with two electrons provided by NADPH via cytochrome P450 reductase (CPR; NADPH-ferrihemoprotein reductase). This Felis catus (Cat) protein is Steroid 17-alpha-hydroxylase/17,20 lyase (CYP17A1).